A 541-amino-acid polypeptide reads, in one-letter code: Berberine bridge enzyme-like 24 (541 aa).

The signal sequence occupies residues 1-32; the sequence is MGNSKPLPTISCIIVSVLYFSFYCITPTSSSA. A disulfide bridge links cysteine 41 with cysteine 105. Residue asparagine 62 is glycosylated (N-linked (GlcNAc...) asparagine). The FAD-binding PCMH-type domain occupies 83-259; the sequence is SMPKPGFIFR…LAWKIKLVPV (177 aa). The segment at residues 120–184 is a cross-link (6-(S-cysteinyl)-8alpha-(pros-histidyl)-FAD (His-Cys)); the sequence is HDFEALSYVS…KIHGFPAGLC (65 aa). Asparagine 309, asparagine 408, and asparagine 435 each carry an N-linked (GlcNAc...) asparagine glycan.

Belongs to the oxygen-dependent FAD-linked oxidoreductase family. FAD is required as a cofactor. In terms of processing, the FAD cofactor is bound via a bicovalent 6-S-cysteinyl, 8alpha-N1-histidyl FAD linkage.

It localises to the secreted. It is found in the cell wall. This chain is Berberine bridge enzyme-like 24, found in Arabidopsis thaliana (Mouse-ear cress).